The chain runs to 405 residues: Arginine biosynthesis bifunctional protein ArgJ (405 aa).

Positions 1-18 are enriched in polar residues; it reads MTSADKNNPDTSTAQGSS. A disordered region spans residues 1–21; sequence MTSADKNNPDTSTAQGSSADL. Residues Thr167, Lys189, Thr200, Glu281, Asn400, and Thr405 each contribute to the substrate site. Thr200 serves as the catalytic Nucleophile.

The protein belongs to the ArgJ family. Heterotetramer of two alpha and two beta chains.

The protein localises to the cytoplasm. It carries out the reaction N(2)-acetyl-L-ornithine + L-glutamate = N-acetyl-L-glutamate + L-ornithine. The catalysed reaction is L-glutamate + acetyl-CoA = N-acetyl-L-glutamate + CoA + H(+). It functions in the pathway amino-acid biosynthesis; L-arginine biosynthesis; L-ornithine and N-acetyl-L-glutamate from L-glutamate and N(2)-acetyl-L-ornithine (cyclic): step 1/1. The protein operates within amino-acid biosynthesis; L-arginine biosynthesis; N(2)-acetyl-L-ornithine from L-glutamate: step 1/4. Its function is as follows. Catalyzes two activities which are involved in the cyclic version of arginine biosynthesis: the synthesis of N-acetylglutamate from glutamate and acetyl-CoA as the acetyl donor, and of ornithine by transacetylation between N(2)-acetylornithine and glutamate. The sequence is that of Arginine biosynthesis bifunctional protein ArgJ from Corynebacterium jeikeium (strain K411).